The chain runs to 610 residues: Glutamine--fructose-6-phosphate aminotransferase [isomerizing] (610 aa).

Cysteine 2 (nucleophile; for GATase activity) is an active-site residue. The region spanning 2–218 (CGIVGAVAQR…EGDVAEITRR (217 aa)) is the Glutamine amidotransferase type-2 domain. SIS domains lie at 286–426 (AADI…EQGR) and 459–600 (LATD…VDQP). Catalysis depends on lysine 605, which acts as the For Fru-6P isomerization activity.

As to quaternary structure, homodimer.

It localises to the cytoplasm. The enzyme catalyses D-fructose 6-phosphate + L-glutamine = D-glucosamine 6-phosphate + L-glutamate. Functionally, catalyzes the first step in hexosamine metabolism, converting fructose-6P into glucosamine-6P using glutamine as a nitrogen source. In Vibrio parahaemolyticus serotype O3:K6 (strain RIMD 2210633), this protein is Glutamine--fructose-6-phosphate aminotransferase [isomerizing].